The sequence spans 105 residues: Large ribosomal subunit protein eL36 (105 aa).

The interval 9–31 (VGLNKGHKVTKNVSKPRHSRRRR) is disordered. Basic residues predominate over residues 13–31 (KGHKVTKNVSKPRHSRRRR). An N6-acetyllysine modification is found at lysine 62.

Belongs to the eukaryotic ribosomal protein eL36 family. In terms of assembly, component of the large ribosomal subunit.

The protein resides in the cytoplasm. The protein localises to the cytosol. In terms of biological role, component of the large ribosomal subunit. The ribosome is a large ribonucleoprotein complex responsible for the synthesis of proteins in the cell. In Oryctolagus cuniculus (Rabbit), this protein is Large ribosomal subunit protein eL36 (RPL36).